We begin with the raw amino-acid sequence, 185 residues long: Elongation factor P (185 aa).

The protein belongs to the elongation factor P family.

The protein localises to the cytoplasm. Its pathway is protein biosynthesis; polypeptide chain elongation. In terms of biological role, involved in peptide bond synthesis. Stimulates efficient translation and peptide-bond synthesis on native or reconstituted 70S ribosomes in vitro. Probably functions indirectly by altering the affinity of the ribosome for aminoacyl-tRNA, thus increasing their reactivity as acceptors for peptidyl transferase. The chain is Elongation factor P from Bacillus cereus (strain G9842).